Here is a 272-residue protein sequence, read N- to C-terminus: MGSATVLDSIIEGVRADVAAREAAVSMDEVKEQAKRAPAPLDVMAALRASGIAVIAEVKRASPSRGALASIADPAELARAYEDGGARIISVLTEQRRFNGSLDDLDAVRAAVSIPVLRKDFIVRPYQIHEARAHGADMLLLIVAALEQPVLESLLERTESLGMTALVEVHTEEEADRALQAGASVIGVNARDLKTLEVDRDCFARIAPGLPSNVIRVAESGVRGTADLLAYAGAGADAVLVGEGLVTSGDPRSAVADLVTAGAHPSCPKPAR.

It belongs to the TrpC family.

The catalysed reaction is 1-(2-carboxyphenylamino)-1-deoxy-D-ribulose 5-phosphate + H(+) = (1S,2R)-1-C-(indol-3-yl)glycerol 3-phosphate + CO2 + H2O. It functions in the pathway amino-acid biosynthesis; L-tryptophan biosynthesis; L-tryptophan from chorismate: step 4/5. This Mycolicibacterium vanbaalenii (strain DSM 7251 / JCM 13017 / BCRC 16820 / KCTC 9966 / NRRL B-24157 / PYR-1) (Mycobacterium vanbaalenii) protein is Indole-3-glycerol phosphate synthase.